The chain runs to 1043 residues: Desmoglein-1 (1043 aa).

Positions 1–23 (MNWPFFRAAVVLFIFLVVLEVNS) are cleaved as a signal peptide. The propeptide occupies 24 to 49 (DFRIQVRDYNTKNGTIKWHSLRRQKR). 4 consecutive Cadherin domains span residues 50-158 (EWIK…PVFS), 159-270 (MSTF…PYME), 271-385 (LPTQ…GSVF), and 386-498 (RPGS…VNGS). The Extracellular segment spans residues 50–551 (EWIKFAAACR…PLRDNVHFGP (502 aa)). 2 N-linked (GlcNAc...) asparagine glycosylation sites follow: N110 and N180. N496 carries N-linked (GlcNAc...) asparagine glycosylation. The helical transmembrane segment at 552 to 572 (AGIGLLIMGFLVLGLVPFLLM) threads the bilayer. Residues 573 to 1043 (CCDCGGAPGG…TKYSTVQYTK (471 aa)) lie on the Cytoplasmic side of the membrane. Residues 770–807 (DVEPFPDSDPSWPPKSTEPVCPPQGTEPTGGGHPPISP) form a disordered region. Desmoglein repeat repeat units follow at residues 819 to 845 (TYPS…TVTE), 846 to 875 (SYTS…ERVV), 876 to 905 (GPIS…ERVI), 906 to 933 (APSS…ERVI), and 934 to 962 (QPTS…ERVV).

Binds to JUP/plakoglobin. Interacts with PKP2. Interacts with DSC3; there is evidence to suggest that the interaction promotes cell-cell adhesion of keratinocytes. As to expression, expressed in the epidermis. Expressed in the muzzle epithelium.

The protein resides in the cell membrane. It is found in the cell junction. The protein localises to the desmosome. It localises to the cytoplasm. Its subcellular location is the nucleus. In terms of biological role, component of intercellular desmosome junctions. Involved in the interaction of plaque proteins and intermediate filaments mediating cell-cell adhesion. The chain is Desmoglein-1 (DSG1) from Bos taurus (Bovine).